A 192-amino-acid polypeptide reads, in one-letter code: Akirin-1 (192 aa).

Positions 17-71 (LLSPGSPKRRRCAPLPGPTPGLRPPDAEPPPPFQTQTPPQSLQQPAPPGSERRLP) are disordered. Serine 22 carries the phosphoserine modification. The Nuclear localization signal motif lies at 23–28 (PKRRRC). The span at 31 to 49 (LPGPTPGLRPPDAEPPPPF) shows a compositional bias: pro residues. Over residues 50 to 60 (QTQTPPQSLQQ) the composition is skewed to low complexity. Threonine 72 bears the Phosphothreonine mark. The segment covering 104–122 (ASESQPHSSALTAPSSPGS) has biased composition (polar residues). The segment at 104–127 (ASESQPHSSALTAPSSPGSSWMKK) is disordered. Residues 189 to 192 (SYVS) carry the SYVS motif motif.

It belongs to the akirin family. In terms of tissue distribution, widely expressed with the highest expression in heart, liver, placenta and peripheral blood leukocytes.

The protein localises to the nucleus. In terms of biological role, molecular adapter that acts as a bridge between proteins, and which is involved skeletal muscle development. Functions as a signal transducer for MSTN during skeletal muscle regeneration and myogenesis. May regulate chemotaxis of both macrophages and myoblasts by reorganising actin cytoskeleton, leading to more efficient lamellipodia formation via a PI3 kinase dependent pathway. In contrast to AKIRIN2, not involved in nuclear import of proteasomes. This Homo sapiens (Human) protein is Akirin-1.